Reading from the N-terminus, the 318-residue chain is L-malyl-CoA/beta-methylmalyl-CoA lyase (318 aa).

Substrate contacts are provided by Phe19, Arg24, Lys30, and Arg76. Residues Glu141 and Asp168 each coordinate Mg(2+). Substrate is bound by residues 167–168 (AD) and 251–252 (IH).

It belongs to the HpcH/HpaI aldolase family. As to quaternary structure, homohexamer. Dimer of trimers. Mg(2+) serves as cofactor. Mn(2+) is required as a cofactor.

The enzyme catalyses (S)-malyl-CoA = glyoxylate + acetyl-CoA. It catalyses the reaction (2R,3S)-beta-methylmalyl-CoA = propanoyl-CoA + glyoxylate. Involved in the ethylmalonyl-CoA pathway for acetate assimilation. Catalyzes the reversible condensation of glyoxylate and acetyl-CoA to L-malyl-CoA and the reversible condensation of glyoxylate and propionyl-CoA to yield beta-methylmalyl-CoA. This Cereibacter sphaeroides (strain ATCC 17029 / ATH 2.4.9) (Rhodobacter sphaeroides) protein is L-malyl-CoA/beta-methylmalyl-CoA lyase.